The primary structure comprises 184 residues: uncharacterized protein (184 aa).

A signal peptide spans 1-20 (MTLRKILALTCLLLPMMASA).

To H.influenzae HI_0045.

It localises to the periplasm. This is an uncharacterized protein from Escherichia coli (strain K12).